The primary structure comprises 372 residues: MAQFSPKPEWLKVRAPGGDTYHHLKETFRKLDLHTVCEEARCPNVGECWREGTATVMLLGDVCTRGCRFCAVTTGDPRGAVDVREPEHVARAIARLSLQYVVMTMVNRDDLLDGGAEHVARTVSRLHALRPDLLIETLVGDFQGHMSAVDMVVDAGPDVFAHNVEVVRRITRVIRDVRSSYDQSLAVLRRAKERQRRLAADAAEAGAPAPRRLTKSSIMVGIGETDDEVLEALRDLREAGVDIVTIGQYLRPSSKHAPVQRFVEPETFAAFERAALEMGFLYAASAPLVRSSYKAAEVFVRSLMDRGGAALPASPGAAAVEALLEERLAVARREAARLTAELDPDEPRPPVAPAPASASPARLVPAASLIRR.

Residues cysteine 37, cysteine 42, cysteine 48, cysteine 63, cysteine 67, cysteine 70, and serine 292 each coordinate [4Fe-4S] cluster. The 233-residue stretch at 49 to 281 folds into the Radical SAM core domain; it reads WREGTATVML…ERAALEMGFL (233 aa). Residues 338-372 are disordered; it reads LTAELDPDEPRPPVAPAPASASPARLVPAASLIRR. Residues 354-372 show a composition bias toward low complexity; sequence APASASPARLVPAASLIRR.

The protein belongs to the radical SAM superfamily. Lipoyl synthase family. The cofactor is [4Fe-4S] cluster.

It localises to the cytoplasm. The catalysed reaction is [[Fe-S] cluster scaffold protein carrying a second [4Fe-4S](2+) cluster] + N(6)-octanoyl-L-lysyl-[protein] + 2 oxidized [2Fe-2S]-[ferredoxin] + 2 S-adenosyl-L-methionine + 4 H(+) = [[Fe-S] cluster scaffold protein] + N(6)-[(R)-dihydrolipoyl]-L-lysyl-[protein] + 4 Fe(3+) + 2 hydrogen sulfide + 2 5'-deoxyadenosine + 2 L-methionine + 2 reduced [2Fe-2S]-[ferredoxin]. The protein operates within protein modification; protein lipoylation via endogenous pathway; protein N(6)-(lipoyl)lysine from octanoyl-[acyl-carrier-protein]: step 2/2. In terms of biological role, catalyzes the radical-mediated insertion of two sulfur atoms into the C-6 and C-8 positions of the octanoyl moiety bound to the lipoyl domains of lipoate-dependent enzymes, thereby converting the octanoylated domains into lipoylated derivatives. The sequence is that of Lipoyl synthase from Sorangium cellulosum (strain So ce56) (Polyangium cellulosum (strain So ce56)).